The primary structure comprises 200 residues: Ependymin-related protein 1 (200 aa).

The N-terminal stretch at 1 to 17 is a signal peptide; sequence MILQAALFLAGLTVVSG. N-linked (GlcNAc...) asparagine glycans are attached at residues asparagine 36, asparagine 124, and asparagine 136.

Belongs to the ependymin family. Component of the acid-soluble and acid-insoluble organic matrix of prismatic shell layers (at protein level). Expressed discontinuously in the anterior zone of the outer fold of the mantle where its expression correlates with shell pigmentation.

It is found in the secreted. This chain is Ependymin-related protein 1, found in Haliotis asinina (Donkey's ear abalone).